A 324-amino-acid chain; its full sequence is MKFGLFFLNFMNSKRSSDQVIEEMLDTAHYVDQLKFDTLAVYENHFSNNGVVGAPLTVAGFLLGMTKNAKVASLNHVITTHHPVRVAEEACLLDQMSEGRFAFGFSDCEKSADMRFFNRPTDSQFQLFSECHKIINDAFTTGYCHPNNDFYSFPKISVNPHAFTEGGPAQFVNATSKEVVEWAAKLGLPLVFRWDDSNAQRKEYAGLYHEVAQAHGVDVSQVRHKLTLLVNQNVDGEAARAEARVYLEEFVRESYSNTDFEQKMGELLSENAIGTYEESTQAARVAIECCGAADLLMSFESMEDKAQQRAVIDVVNANIVKYHS.

Belongs to the bacterial luciferase oxidoreductase family. In terms of assembly, heterodimer of an alpha and a beta chain.

The catalysed reaction is a long-chain fatty aldehyde + FMNH2 + O2 = a long-chain fatty acid + hnu + FMN + H2O + 2 H(+). Functionally, light-emitting reaction in luminous bacteria. The specific role of the beta subunit is unknown, but it is absolutely required for bioluminescence activity. This chain is Alkanal monooxygenase beta chain (luxB), found in Vibrio harveyi (Beneckea harveyi).